A 240-amino-acid polypeptide reads, in one-letter code: Myogenic factor 6 (240 aa).

The bHLH domain maps to 91-142 (DRRKAATLRERRRLKKINEAFEALKRRTVANPNQRLPKVEILRSAINYIERL).

Efficient DNA binding requires dimerization with another bHLH protein. Skeletal muscle.

It localises to the nucleus. In terms of biological role, involved in muscle differentiation (myogenic factor). Induces fibroblasts to differentiate into myoblasts. Probable sequence specific DNA-binding protein. The polypeptide is Myogenic factor 6 (myf6) (Xenopus laevis (African clawed frog)).